The chain runs to 370 residues: Ornithine carbamoyltransferase, mitochondrial (370 aa).

The transit peptide at 1–38 (MPSPLRTAPQPPLRAFHNPPALRRLYSSTSHSAATPAT) directs the protein to the mitochondrion. Carbamoyl phosphate is bound by residues 97–100 (STRT), arginine 148, histidine 175, and glutamine 178. Residues asparagine 216, aspartate 282, serine 286, and methionine 287 each coordinate L-ornithine. Catalysis depends on cysteine 324, which acts as the Proton acceptor. Carbamoyl phosphate is bound by residues 324–325 (CL) and arginine 351.

Belongs to the aspartate/ornithine carbamoyltransferase superfamily. OTCase family. In terms of assembly, homotrimer.

The protein resides in the mitochondrion matrix. The catalysed reaction is carbamoyl phosphate + L-ornithine = L-citrulline + phosphate + H(+). The protein operates within amino-acid biosynthesis; L-arginine biosynthesis; L-arginine from L-ornithine and carbamoyl phosphate: step 1/3. The sequence is that of Ornithine carbamoyltransferase, mitochondrial (argB) from Aspergillus niger.